We begin with the raw amino-acid sequence, 167 residues long: Translationally-controlled tumor protein homolog (167 aa).

One can recognise a TCTP domain in the interval 1-167 (MIIFTDVISG…WKHGVSEDKI (167 aa)).

Belongs to the TCTP family.

The protein resides in the cytoplasm. It is found in the cytoskeleton. Functionally, involved in protein synthesis. Involved in microtubule stabilization. The chain is Translationally-controlled tumor protein homolog from Debaryomyces hansenii (strain ATCC 36239 / CBS 767 / BCRC 21394 / JCM 1990 / NBRC 0083 / IGC 2968) (Yeast).